A 203-amino-acid chain; its full sequence is MNRVEPPYDVKEALVFTQKMAQLSKALWKSIEKDWQQWLKPYDLNINEHHILWIAYQLNGASISEIAKFGVMHVSTAFNFSKKLEERGYLRFSKRLNDKRNTYVQLTEEGTEVFWSLLEEFDPTRNAVFKGSQPLYHLFGKFPEVAEMMCMIRHIYGDDFMEIFETSLTNIDNDFESVNGKLKKKAKDSAADEPAEELEPVNS.

The HTH marR-type domain occupies 13–157 (ALVFTQKMAQ…MMCMIRHIYG (145 aa)). A DNA-binding region (H-T-H motif) is located at residues 63–86 (ISEIAKFGVMHVSTAFNFSKKLEE). Positions 183 to 203 (KKKAKDSAADEPAEELEPVNS) are disordered. Over residues 191-203 (ADEPAEELEPVNS) the composition is skewed to acidic residues.

Homodimer. Interacts with SinR.

Negative regulator of protease production and sporulation. Acts by binding directly to the promoter of protease genes (aprE and nprE), and by repressing oligopeptide permease operons (appABCDF and oppABCDF), thereby preventing uptake of oligopeptides required for initiation of sporulation. Acts with SinR as a corepressor of epr expression. Binds to non-m6A-5-methylated 5'-GACGAG-3' sites, tested with scpA; when the target is methylated by DnmA, this repressor no longer binds and transcription is up-regulated. The chain is DNA-binding transcriptional repressor ScoC from Bacillus subtilis (strain 168).